We begin with the raw amino-acid sequence, 221 residues long: Ribosomal RNA large subunit methyltransferase E (221 aa).

S-adenosyl-L-methionine contacts are provided by Gly-60, Trp-62, Asp-89, Asp-105, and Asp-134. Catalysis depends on Lys-174, which acts as the Proton acceptor. Residues 199–221 (KPKASRDKSSETFLLGRQLKHPG) are disordered.

Belongs to the class I-like SAM-binding methyltransferase superfamily. RNA methyltransferase RlmE family.

The protein localises to the cytoplasm. The enzyme catalyses uridine(2552) in 23S rRNA + S-adenosyl-L-methionine = 2'-O-methyluridine(2552) in 23S rRNA + S-adenosyl-L-homocysteine + H(+). Functionally, specifically methylates the uridine in position 2552 of 23S rRNA at the 2'-O position of the ribose in the fully assembled 50S ribosomal subunit. The protein is Ribosomal RNA large subunit methyltransferase E of Ralstonia pickettii (strain 12J).